The following is a 351-amino-acid chain: Phenylalanine--tRNA ligase alpha subunit (351 aa).

Position 266 (glutamate 266) interacts with Mg(2+).

This sequence belongs to the class-II aminoacyl-tRNA synthetase family. Phe-tRNA synthetase alpha subunit type 1 subfamily. Tetramer of two alpha and two beta subunits. Mg(2+) is required as a cofactor.

The protein resides in the cytoplasm. It catalyses the reaction tRNA(Phe) + L-phenylalanine + ATP = L-phenylalanyl-tRNA(Phe) + AMP + diphosphate + H(+). This Anaplasma marginale (strain St. Maries) protein is Phenylalanine--tRNA ligase alpha subunit.